Consider the following 570-residue polypeptide: Proline--tRNA ligase (570 aa).

It belongs to the class-II aminoacyl-tRNA synthetase family. ProS type 1 subfamily. In terms of assembly, homodimer.

The protein resides in the cytoplasm. The catalysed reaction is tRNA(Pro) + L-proline + ATP = L-prolyl-tRNA(Pro) + AMP + diphosphate. Catalyzes the attachment of proline to tRNA(Pro) in a two-step reaction: proline is first activated by ATP to form Pro-AMP and then transferred to the acceptor end of tRNA(Pro). As ProRS can inadvertently accommodate and process non-cognate amino acids such as alanine and cysteine, to avoid such errors it has two additional distinct editing activities against alanine. One activity is designated as 'pretransfer' editing and involves the tRNA(Pro)-independent hydrolysis of activated Ala-AMP. The other activity is designated 'posttransfer' editing and involves deacylation of mischarged Ala-tRNA(Pro). The misacylated Cys-tRNA(Pro) is not edited by ProRS. The sequence is that of Proline--tRNA ligase from Neisseria gonorrhoeae (strain ATCC 700825 / FA 1090).